Reading from the N-terminus, the 195-residue chain is 2-hydroxychromene-2-carboxylate isomerase (195 aa).

Residue serine 13 is the Nucleophile of the active site. Serine 13 is a binding site for glutathione. Substrate-binding positions include lysine 45 and 55–56 (NR). 181–184 (WGND) contributes to the glutathione binding site.

It belongs to the GST superfamily. NadH family. Glutathione is required as a cofactor.

The catalysed reaction is 2-hydroxychromene-2-carboxylate = (3E)-4-(2-hydroxyphenyl)-2-oxobut-3-enoate. Its activity is regulated as follows. Activated by salicylate. Its function is as follows. Involved in the naphthalene and naphthalenesulfonate catabolic pathway. Catalyzes the reversible glutathione-dependent isomerization of 2-hydroxychromene-2-carboxylate (HCCA) to trans-O-hydroxybenzylidenepyruvate (THBPA). It can also use 2-hydroxybenzo[g]chromene-2-carboxylate as substrate. The sequence is that of 2-hydroxychromene-2-carboxylate isomerase (nsaD) from Sphingobium xenophagum.